The sequence spans 82 residues: Leucinostatins biosynthesis cluster protein M (82 aa).

The segment at 34-82 (ARNETHDPSGPRAPVSSMRLGPRSRPYHHGTARLRGSPNCSRDSSSAAT) is disordered. Positions 71-82 (PNCSRDSSSAAT) are enriched in polar residues.

Its function is as follows. Part of the gene cluster that mediates the biosynthesis of the lipopeptide antibiotics leucinostatins that show extensive biological activities, including antimalarial, antiviral, antibacterial, antifungal, and antitumor activities, as well as phytotoxic. The function of lcsM within the leucinostatins biosynthesis has not been identified yet. The polypeptide is Leucinostatins biosynthesis cluster protein M (Purpureocillium lilacinum (Paecilomyces lilacinus)).